Consider the following 86-residue polypeptide: Large ribosomal subunit protein bL27 (86 aa).

The segment at 1–31 (MAHKKAGGSSRNGRDSAGQRRGVKKFGGEPV) is disordered.

It belongs to the bacterial ribosomal protein bL27 family.

In Desulfotalea psychrophila (strain LSv54 / DSM 12343), this protein is Large ribosomal subunit protein bL27.